The primary structure comprises 114 residues: Iron-sulfur cluster insertion protein ErpA (114 aa).

C42, C106, and C108 together coordinate iron-sulfur cluster.

It belongs to the HesB/IscA family. In terms of assembly, homodimer. Requires iron-sulfur cluster as cofactor.

In terms of biological role, required for insertion of 4Fe-4S clusters for at least IspG. The chain is Iron-sulfur cluster insertion protein ErpA from Enterobacter sp. (strain 638).